We begin with the raw amino-acid sequence, 251 residues long: Tropomyosin-2 (251 aa).

Residues 1–251 (MSGEEKLGKL…DTVADEPDDE (251 aa)) adopt a coiled-coil conformation.

Belongs to the tropomyosin family. In terms of assembly, homodimer. Striated muscle specific.

The chain is Tropomyosin-2 (TPM2) from Podocoryna carnea (Hydrozoan).